A 355-amino-acid polypeptide reads, in one-letter code: Transcription factor TCP13 (355 aa).

A disordered region spans residues 1 to 57 (MNIVSWKDANDEVAGGATTRREREVKEDQEETEVRATSGKTVIKKQPTSISSSSSSW). Residues 74–132 (GKDRHSKVCTLRGLRDRRVRLSVPTAIQLYDLQERLGVDQPSKAVDWLLDAAKEEIDEL) enclose the TCP domain. The segment at 329–355 (TNSTTTANMSRHLGSERCTSRGSDHHM) is disordered. Over residues 341-355 (LGSERCTSRGSDHHM) the composition is skewed to basic and acidic residues.

In terms of assembly, interacts with AHL27 and AHL29. Interacts with SPL. Interacts with KIN10; KIN11 and FLZ3. In terms of tissue distribution, expressed in cotyledons, particularly in the vascular region, in leaves, buds, flowers and immature siliques, and, to a lower extent, in roots.

It localises to the nucleus. It is found in the plastid. Its subcellular location is the chloroplast. Functionally, plays a pivotal role in the control of morphogenesis of shoot organs by negatively regulating the expression of boundary-specific genes such as CUC genes, probably through the induction of miRNA (e.g. miR164). Binds to the 3'-ACC-5' repeats in the light-responsive promoter (LRP) of psbD, and activates its transcription. Participates in ovule development. This is Transcription factor TCP13 (TCP13) from Arabidopsis thaliana (Mouse-ear cress).